Reading from the N-terminus, the 188-residue chain is Protein GrpE (188 aa).

The tract at residues 1 to 24 (MSDENKPGEAAELDAGVAPEAQPE) is disordered.

It belongs to the GrpE family. In terms of assembly, homodimer.

It localises to the cytoplasm. Participates actively in the response to hyperosmotic and heat shock by preventing the aggregation of stress-denatured proteins, in association with DnaK and GrpE. It is the nucleotide exchange factor for DnaK and may function as a thermosensor. Unfolded proteins bind initially to DnaJ; upon interaction with the DnaJ-bound protein, DnaK hydrolyzes its bound ATP, resulting in the formation of a stable complex. GrpE releases ADP from DnaK; ATP binding to DnaK triggers the release of the substrate protein, thus completing the reaction cycle. Several rounds of ATP-dependent interactions between DnaJ, DnaK and GrpE are required for fully efficient folding. This Hyphomonas neptunium (strain ATCC 15444) protein is Protein GrpE.